Reading from the N-terminus, the 467-residue chain is Multiple inositol polyphosphate phosphatase 1 (467 aa).

A signal peptide spans 1–15; the sequence is MRLLILLLLPLVAIA. His67 is an active-site residue. N-linked (GlcNAc...) asparagine glycosylation is found at Asn120, Asn159, and Asn234. The GPI-anchor amidated glycine moiety is linked to residue Gly441. Positions 442–467 are cleaved as a propeptide — removed in mature form; the sequence is GAPSLGSGVGGLLATTLAAMLVYLMH.

The protein belongs to the histidine acid phosphatase family. MINPP1 subfamily. Post-translationally, N-glycosylated.

The protein localises to the cell membrane. Its subcellular location is the apical cell membrane. It is found in the basolateral cell membrane. It localises to the cell projection. The protein resides in the filopodium. The protein localises to the cell junction. The enzyme catalyses (2R)-2,3-bisphosphoglycerate + H2O = (2R)-2-phosphoglycerate + phosphate. It catalyses the reaction 1D-myo-inositol hexakisphosphate + H2O = 1D-myo-inositol 1,2,4,5,6-pentakisphosphate + phosphate. The catalysed reaction is 1D-myo-inositol 1,2,4,5,6-pentakisphosphate + H2O = 1D-myo-inositol 1,2,5,6-tetrakisphosphate + phosphate. It carries out the reaction 1D-myo-inositol 1,2,5,6-tetrakisphosphate + H2O = 1D-myo-inositol 1,2,6-trisphosphate + phosphate. Functionally, probable multiple inositol polyphosphate phosphatase that hydrolyzes 1D-myo-inositol 1,3,4,5,6-pentakisphosphate (InsP5[2OH]) and 1D-myo-inositol hexakisphosphate (InsP6) to a range of less phosphorylated inositol phosphates. This regulates the availability of these various small molecule second messengers and metal chelators which control many aspects of cell physiology. May have a dual substrate specificity, and function as a 2,3-bisphosphoglycerate 3-phosphatase hydrolyzing 2,3-bisphosphoglycerate to 2-phosphoglycerate. 2,3-bisphosphoglycerate (BPG) is formed as part of the Rapoport-Luebering glycolytic bypass. Has a role in embryonic tracheal development where it localizes to the leading edge of actively migrating branches. In these leading cells, enhances formation and/or maintenance of filopodia which may drive branch migration and elongation by cell-cell intercalation. The function in tracheal morphogenesis is dependent on its inositol polyphosphate phosphatase activity. In Drosophila melanogaster (Fruit fly), this protein is Multiple inositol polyphosphate phosphatase 1.